The following is a 187-amino-acid chain: Acetyl-CoA decarbonylase/synthase complex subunit epsilon (187 aa).

A Blocked amino end (Met) modification is found at Met-1.

This sequence belongs to the CdhB family. Heterotetramer of two alpha and two epsilon subunits. The ACDS complex is made up of alpha, epsilon, beta, gamma and delta subunits with a probable stoichiometry of (alpha(2)epsilon(2))(4)-beta(8)-(gamma(1)delta(1))(8).

In terms of biological role, part of a complex that catalyzes the reversible cleavage of acetyl-CoA, allowing autotrophic growth from CO(2). The alpha-epsilon subcomponent functions as a carbon monoxide dehydrogenase. The precise role of the epsilon subunit is unclear; it may have a stabilizing role within the alpha(2)epsilon(2) component and/or be involved in electron transfer to FAD during a potential FAD-mediated CO oxidation. This chain is Acetyl-CoA decarbonylase/synthase complex subunit epsilon, found in Methanothrix soehngenii (Methanosaeta concilii).